A 247-amino-acid chain; its full sequence is MSHRDTLFSAPIARLGDWTFDERVAEVFPDMIQRSVPGYSNIISMIGMLAERFVQPNTQVYDLGCSLGAATLSVRRNIRHEHCRIIAVDNSPAMIERCRRHIDAYKAPTPVEVVEGDIRDITIENASMVVLNFTLQFLEPAERQALLDKIYLGLNPGGALVLSEKFSFEDAKVGELLFNMHHDFKRANGYSELEISQKRSMLENVMLTDSVETHKSRLRKAGFEHSELWFQCFNFGSLVALKAGVAA.

S-adenosyl-L-methionine contacts are provided by residues tyrosine 39, 64 to 66 (GCS), 89 to 90 (DN), 117 to 118 (DI), asparagine 132, and arginine 199.

This sequence belongs to the class I-like SAM-binding methyltransferase superfamily. Cx-SAM synthase family. Homodimer.

It catalyses the reaction prephenate + S-adenosyl-L-methionine = carboxy-S-adenosyl-L-methionine + 3-phenylpyruvate + H2O. Its function is as follows. Catalyzes the conversion of S-adenosyl-L-methionine (SAM) to carboxy-S-adenosyl-L-methionine (Cx-SAM). The chain is Carboxy-S-adenosyl-L-methionine synthase from Salmonella paratyphi B (strain ATCC BAA-1250 / SPB7).